The primary structure comprises 45 residues: Large ribosomal subunit protein bL36 (45 aa).

Residues 26 to 45 (VINKKDPNRKQRQKGPARKK) are disordered. Basic residues predominate over residues 35 to 45 (KQRQKGPARKK).

Belongs to the bacterial ribosomal protein bL36 family.

The sequence is that of Large ribosomal subunit protein bL36 from Protochlamydia amoebophila (strain UWE25).